Consider the following 1399-residue polypeptide: DNA-directed RNA polymerase subunit beta' (1399 aa).

The Zn(2+) site is built by cysteine 70, cysteine 72, cysteine 85, and cysteine 88. Mg(2+)-binding residues include aspartate 460, aspartate 462, and aspartate 464. Positions 814, 888, 895, and 898 each coordinate Zn(2+).

Belongs to the RNA polymerase beta' chain family. The RNAP catalytic core consists of 2 alpha, 1 beta, 1 beta' and 1 omega subunit. When a sigma factor is associated with the core the holoenzyme is formed, which can initiate transcription. Requires Mg(2+) as cofactor. The cofactor is Zn(2+).

It carries out the reaction RNA(n) + a ribonucleoside 5'-triphosphate = RNA(n+1) + diphosphate. In terms of biological role, DNA-dependent RNA polymerase catalyzes the transcription of DNA into RNA using the four ribonucleoside triphosphates as substrates. This is DNA-directed RNA polymerase subunit beta' from Pseudomonas fluorescens (strain Pf0-1).